We begin with the raw amino-acid sequence, 1076 residues long: Zinc-regulated protein 8 (1076 aa).

Over residues 1–11 the composition is skewed to basic residues; that stretch reads MRSFIKAHKKS. Disordered stretches follow at residues 1–66, 85–162, 190–223, and 234–253; these read MRSF…PGFE, SNLN…RTTD, PASP…TSPS, and KNKG…SSKK. Polar residues predominate over residues 23–34; it reads NFSGNTNNSSQR. The span at 93–106 shows a compositional bias: low complexity; the sequence is STPTTSTNQTTSNS. Positions 107–117 are enriched in polar residues; the sequence is FVLQNPPTKNT. Pro residues predominate over residues 118-128; sequence GPPPPLPPPLF. 2 stretches are compositionally biased toward polar residues: residues 193-206 and 214-223; these read PASN…SKQF and ENLTSTTSPS. Phosphoserine is present on residues serine 275 and serine 354. 3 disordered regions span residues 357 to 450, 534 to 557, and 566 to 585; these read IRHG…DDES, LSDD…ESDN, and GKET…SLGE. Over residues 362–378 the composition is skewed to polar residues; that stretch reads LQSSPSKVNKNDSQNET. Residues serine 403 and serine 407 each carry the phosphoserine modification. Basic and acidic residues predominate over residues 408–418; the sequence is VNEKETHKAND. The span at 419–450 shows a compositional bias: acidic residues; it reads CNDESSENGDGDNDHDDDYDDDDDDDDDDDES. The segment covering 576–585 has biased composition (basic and acidic residues); it reads GHHDDASLGE. Phosphoserine occurs at positions 632 and 676. Disordered regions lie at residues 658–701, 713–762, 909–931, 1000–1020, and 1042–1076; these read NIIR…KPTV, SASD…PHSQ, RRTL…FSSV, HNVG…QISN, and PTNS…PKRA. Polar residues-rich tracts occupy residues 690–701 and 739–748; these read LTGTTGSTKPTV and QVSLQSSLYE.

The protein belongs to the ZRG8 family. Interacts with BUD27, GIS1 and SSD1.

It is found in the cytoplasm. Its subcellular location is the bud. The protein resides in the bud neck. The protein localises to the bud tip. In terms of biological role, involved in the integrity functions of RAM, a conserved signaling network that regulates maintenance of polarized growth and daughter-cell-specific transcription. The protein is Zinc-regulated protein 8 (ZRG8) of Saccharomyces cerevisiae (strain ATCC 204508 / S288c) (Baker's yeast).